The chain runs to 190 residues: MALEFLAATRGMDNLVMSCSVTLLFSSSLSFVLAIKNLTKSSFVVSKDKLPIQTPYLFSSFFFFFTTSPDSSPVGVLIVDSSPWASFSEAPDFFFSASSLYSSIDLGSILYFAFNSSRVTLPLLKRRFCFFDRGMELFRSISISSSAFLFFVGSSKAFLTCSSLSFFVTASSFDSSVSDILSQIIESCWV.

4 consecutive transmembrane segments (helical) span residues 15-35 (LVMSCSVTLLFSSSLSFVLAI), 58-78 (FSSFFFFFTTSPDSSPVGVLI), 94-114 (FFSASSLYSSIDLGSILYFAF), and 148-168 (FLFFVGSSKAFLTCSSLSFFV).

The protein resides in the membrane. This is an uncharacterized protein from Saccharomyces cerevisiae (strain ATCC 204508 / S288c) (Baker's yeast).